The following is a 325-amino-acid chain: tRNA N6-adenosine threonylcarbamoyltransferase (325 aa).

3 residues coordinate Fe cation: His-107, His-111, and Tyr-127. Substrate is bound by residues 127 to 131 (YVSGG), Asp-159, Gly-172, Glu-176, and Asn-257. Residue Asp-285 coordinates Fe cation.

This sequence belongs to the KAE1 / TsaD family. As to quaternary structure, monomer. Component of the KEOPS complex that consists of Kae1, Bud32, Cgi121 and Pcc1; the whole complex dimerizes. Fe(2+) serves as cofactor.

It is found in the cytoplasm. It carries out the reaction L-threonylcarbamoyladenylate + adenosine(37) in tRNA = N(6)-L-threonylcarbamoyladenosine(37) in tRNA + AMP + H(+). Required for the formation of a threonylcarbamoyl group on adenosine at position 37 (t(6)A37) in tRNAs that read codons beginning with adenine. Is a component of the KEOPS complex that is probably involved in the transfer of the threonylcarbamoyl moiety of threonylcarbamoyl-AMP (TC-AMP) to the N6 group of A37. Kae1 likely plays a direct catalytic role in this reaction, but requires other protein(s) of the complex to fulfill this activity. This chain is tRNA N6-adenosine threonylcarbamoyltransferase, found in Thermococcus kodakarensis (strain ATCC BAA-918 / JCM 12380 / KOD1) (Pyrococcus kodakaraensis (strain KOD1)).